Reading from the N-terminus, the 488-residue chain is Ammonium transporter 1 member 1 (488 aa).

Transmembrane regions (helical) follow at residues 47–69, 90–109, 129–148, 153–175, 195–217, 238–257, 281–303, 316–333, 337–356, 368–387, and 418–440; these read TYLL…LLAG, LFYY…NGFI, FLYQ…GSIA, FVAY…SHWF, VIDF…YGAL, HSAS…WYGF, AVGR…TLFG, VCNG…GCSV, WAAI…FNML, AAQL…GLFA, and HIIQ…FYIL.

The protein belongs to the ammonia transporter channel (TC 1.A.11.2) family. Root hairs and leaves.

The protein localises to the membrane. In terms of biological role, ammonium transporter that may be involved in ammonium uptake from the soil. This is Ammonium transporter 1 member 1 (AMT1-1) from Solanum lycopersicum (Tomato).